We begin with the raw amino-acid sequence, 219 residues long: Antigen 5 like allergen Cul n 1 (219 aa).

Positions methionine 1–serine 19 are cleaved as a signal peptide. Disulfide bonds link cysteine 23–cysteine 45, cysteine 28–cysteine 124, and cysteine 55–cysteine 117. The region spanning leucine 73 to tryptophan 211 is the SCP domain.

This sequence belongs to the CRISP family. In terms of tissue distribution, expressed in salivary glands.

Its subcellular location is the secreted. The protein is Antigen 5 like allergen Cul n 1 of Culicoides nubeculosus (Biting midge).